The sequence spans 361 residues: Holliday junction branch migration complex subunit RuvB (361 aa).

Positions 1-21 (MHKDEDQRLLGAVPLPNDPDR) are disordered. The large ATPase domain (RuvB-L) stretch occupies residues 1–184 (MHKDEDQRLL…FGIPIRLNFY (184 aa)). ATP-binding positions include Leu23, Arg24, Gly65, Lys68, Thr69, Thr70, 131-133 (EDY), Arg174, Tyr184, and Arg221. Thr69 contributes to the Mg(2+) binding site. The small ATPAse domain (RuvB-S) stretch occupies residues 185-255 (TIEELEYIVQ…IADEALSRLE (71 aa)). The head domain (RuvB-H) stretch occupies residues 258–361 (HLGLDPLDRR…QTVLWDEADD (104 aa)). The DNA site is built by Arg294, Arg313, and Arg318.

It belongs to the RuvB family. As to quaternary structure, homohexamer. Forms an RuvA(8)-RuvB(12)-Holliday junction (HJ) complex. HJ DNA is sandwiched between 2 RuvA tetramers; dsDNA enters through RuvA and exits via RuvB. An RuvB hexamer assembles on each DNA strand where it exits the tetramer. Each RuvB hexamer is contacted by two RuvA subunits (via domain III) on 2 adjacent RuvB subunits; this complex drives branch migration. In the full resolvosome a probable DNA-RuvA(4)-RuvB(12)-RuvC(2) complex forms which resolves the HJ.

The protein localises to the cytoplasm. The catalysed reaction is ATP + H2O = ADP + phosphate + H(+). Functionally, the RuvA-RuvB-RuvC complex processes Holliday junction (HJ) DNA during genetic recombination and DNA repair, while the RuvA-RuvB complex plays an important role in the rescue of blocked DNA replication forks via replication fork reversal (RFR). RuvA specifically binds to HJ cruciform DNA, conferring on it an open structure. The RuvB hexamer acts as an ATP-dependent pump, pulling dsDNA into and through the RuvAB complex. RuvB forms 2 homohexamers on either side of HJ DNA bound by 1 or 2 RuvA tetramers; 4 subunits per hexamer contact DNA at a time. Coordinated motions by a converter formed by DNA-disengaged RuvB subunits stimulates ATP hydrolysis and nucleotide exchange. Immobilization of the converter enables RuvB to convert the ATP-contained energy into a lever motion, pulling 2 nucleotides of DNA out of the RuvA tetramer per ATP hydrolyzed, thus driving DNA branch migration. The RuvB motors rotate together with the DNA substrate, which together with the progressing nucleotide cycle form the mechanistic basis for DNA recombination by continuous HJ branch migration. Branch migration allows RuvC to scan DNA until it finds its consensus sequence, where it cleaves and resolves cruciform DNA. In Bartonella henselae (strain ATCC 49882 / DSM 28221 / CCUG 30454 / Houston 1) (Rochalimaea henselae), this protein is Holliday junction branch migration complex subunit RuvB.